The following is a 101-amino-acid chain: NADH-quinone oxidoreductase subunit K (101 aa).

A run of 3 helical transmembrane segments spans residues 4 to 24 (LAHY…GIFL), 30 to 50 (IVLL…FVAF), and 61 to 81 (VFVF…LAIL).

It belongs to the complex I subunit 4L family. In terms of assembly, NDH-1 is composed of 14 different subunits. Subunits NuoA, H, J, K, L, M, N constitute the membrane sector of the complex.

Its subcellular location is the cell inner membrane. The catalysed reaction is a quinone + NADH + 5 H(+)(in) = a quinol + NAD(+) + 4 H(+)(out). In terms of biological role, NDH-1 shuttles electrons from NADH, via FMN and iron-sulfur (Fe-S) centers, to quinones in the respiratory chain. The immediate electron acceptor for the enzyme in this species is believed to be ubiquinone. Couples the redox reaction to proton translocation (for every two electrons transferred, four hydrogen ions are translocated across the cytoplasmic membrane), and thus conserves the redox energy in a proton gradient. The polypeptide is NADH-quinone oxidoreductase subunit K (Ralstonia nicotianae (strain ATCC BAA-1114 / GMI1000) (Ralstonia solanacearum)).